Here is a 444-residue protein sequence, read N- to C-terminus: CCA-adding enzyme (444 aa).

ATP-binding residues include Ser-57 and Arg-60. CTP is bound by residues Ser-57 and Arg-60. Positions 69, 71, and 124 each coordinate Mg(2+). ATP-binding residues include His-147, Lys-168, and Tyr-177. 3 residues coordinate CTP: His-147, Lys-168, and Tyr-177.

This sequence belongs to the tRNA nucleotidyltransferase/poly(A) polymerase family. Archaeal CCA-adding enzyme subfamily. As to quaternary structure, homodimer. Mg(2+) serves as cofactor.

The catalysed reaction is a tRNA precursor + 2 CTP + ATP = a tRNA with a 3' CCA end + 3 diphosphate. The enzyme catalyses a tRNA with a 3' CCA end + 2 CTP + ATP = a tRNA with a 3' CCACCA end + 3 diphosphate. Its function is as follows. Catalyzes the addition and repair of the essential 3'-terminal CCA sequence in tRNAs without using a nucleic acid template. Adds these three nucleotides in the order of C, C, and A to the tRNA nucleotide-73, using CTP and ATP as substrates and producing inorganic pyrophosphate. tRNA 3'-terminal CCA addition is required both for tRNA processing and repair. Also involved in tRNA surveillance by mediating tandem CCA addition to generate a CCACCA at the 3' terminus of unstable tRNAs. While stable tRNAs receive only 3'-terminal CCA, unstable tRNAs are marked with CCACCA and rapidly degraded. The chain is CCA-adding enzyme from Methanococcus maripaludis (strain C7 / ATCC BAA-1331).